Here is a 245-residue protein sequence, read N- to C-terminus: tRNA (guanine-N(1)-)-methyltransferase (245 aa).

S-adenosyl-L-methionine is bound by residues Gly113 and 133-138 (IGDYVL).

The protein belongs to the RNA methyltransferase TrmD family. As to quaternary structure, homodimer.

The protein resides in the cytoplasm. It catalyses the reaction guanosine(37) in tRNA + S-adenosyl-L-methionine = N(1)-methylguanosine(37) in tRNA + S-adenosyl-L-homocysteine + H(+). Functionally, specifically methylates guanosine-37 in various tRNAs. The sequence is that of tRNA (guanine-N(1)-)-methyltransferase from Oceanobacillus iheyensis (strain DSM 14371 / CIP 107618 / JCM 11309 / KCTC 3954 / HTE831).